We begin with the raw amino-acid sequence, 85 residues long: MGLKLDLTWFDKSTEDFKGEEYSKDFGDDGSVMESLGVPFKDNVNNGCFDVIAEWVPLLQPYFNHQIDISDNEYFVSFDYRDGDW.

The protein belongs to the cloacin immunity protein family. As to quaternary structure, native colicin E3 is a 1:1 complex of A chain and protein B (Im3). Binds between the translocation and cytotoxic RNase domains of intact ColE3, blocking access to the 16S rRNA substrate. Forms a very tight 1:1 complex with the cytotoxic fragment (residues 456-551) of ColE3 (ceaC).

In terms of biological role, the cognate immunity protein for colicin E3 (ColE3), protects cells which harbor the plasmid ColE3 against the toxic action of ColE3. This protein inhibits the 16S RNA hydrolyzing activity of ColE3 by binding with very high affinity to the C-terminal catalytic domain of ColE3. The sequence is that of Colicin E3 immunity protein from Escherichia coli.